A 158-amino-acid chain; its full sequence is Extracellular giant hemoglobin major globin subunit A2 (158 aa).

Residues 1-16 (MKSLIVFACLVAYAAA) form the signal peptide. The 142-residue stretch at 17-158 (DCTSLNRLLV…MNQIVSGISG (142 aa)) folds into the Globin domain. Cys-18 and Cys-148 form a disulfide bridge. Residue Cys-89 coordinates hydrogen sulfide. His-110 serves as a coordination point for heme b.

It belongs to the globin family. In terms of assembly, the 400 kDa hemoglobin consists of a spherical 24-mer arranged as a double layer of dome-shaped dodecamers. Each dodecamer is composed of the 3-fold trimer of the tetramer A1-A2-B1-B2 having one intra-tetramer (A1-B2) disulfide bond and one inter-tetramer (B1-B2) disulfide bond per tetramer.

Its subcellular location is the secreted. The extracellular giant hemoglobin is able to bind and transport oxygen and hydrosulfide simultaneously and reversibly at two different sites. The sequence is that of Extracellular giant hemoglobin major globin subunit A2 (ghbA2) from Oligobrachia mashikoi (Beard worm).